Reading from the N-terminus, the 92-residue chain is DNA-directed RNA polymerase subunit Rpo11 (92 aa).

The protein belongs to the archaeal Rpo11/eukaryotic RPB11/RPC19 RNA polymerase subunit family. Part of the RNA polymerase complex.

It localises to the cytoplasm. It carries out the reaction RNA(n) + a ribonucleoside 5'-triphosphate = RNA(n+1) + diphosphate. Its function is as follows. DNA-dependent RNA polymerase (RNAP) catalyzes the transcription of DNA into RNA using the four ribonucleoside triphosphates as substrates. This chain is DNA-directed RNA polymerase subunit Rpo11, found in Methanosarcina mazei (strain ATCC BAA-159 / DSM 3647 / Goe1 / Go1 / JCM 11833 / OCM 88) (Methanosarcina frisia).